The following is a 204-amino-acid chain: Somatotropin (204 aa).

A signal peptide spans 1–17 (MNSVVLLLSVVCLGVSS). Residue glutamine 18 is modified to Pyrrolidone carboxylic acid. Histidine 36 lines the Zn(2+) pocket. An intrachain disulfide couples cysteine 69 to cysteine 177. Zn(2+) is bound at residue glutamate 186. Residues cysteine 194 and cysteine 202 are joined by a disulfide bond.

It belongs to the somatotropin/prolactin family.

It is found in the secreted. Its function is as follows. Growth hormone plays an important role in growth control and involved in the regulation of several anabolic processes. The protein is Somatotropin (gh) of Oreochromis niloticus (Nile tilapia).